The sequence spans 1400 residues: DNA-directed RNA polymerase subunit beta' (1400 aa).

4 residues coordinate Zn(2+): Cys71, Cys73, Cys86, and Cys89. Residues Asp462, Asp464, and Asp466 each contribute to the Mg(2+) site. Residues Cys811, Cys885, Cys892, and Cys895 each coordinate Zn(2+).

It belongs to the RNA polymerase beta' chain family. In terms of assembly, the RNAP catalytic core consists of 2 alpha, 1 beta, 1 beta' and 1 omega subunit. When a sigma factor is associated with the core the holoenzyme is formed, which can initiate transcription. It depends on Mg(2+) as a cofactor. Zn(2+) is required as a cofactor.

The enzyme catalyses RNA(n) + a ribonucleoside 5'-triphosphate = RNA(n+1) + diphosphate. Functionally, DNA-dependent RNA polymerase catalyzes the transcription of DNA into RNA using the four ribonucleoside triphosphates as substrates. The chain is DNA-directed RNA polymerase subunit beta' from Brucella suis (strain ATCC 23445 / NCTC 10510).